The chain runs to 790 residues: LPS-assembly protein LptD (790 aa).

An N-terminal signal peptide occupies residues 1–20; the sequence is MRMLRWLILSAFSVAGAVQA.

The protein belongs to the LptD family. In terms of assembly, component of the lipopolysaccharide transport and assembly complex. Interacts with LptE and LptA.

Its subcellular location is the cell outer membrane. In terms of biological role, together with LptE, is involved in the assembly of lipopolysaccharide (LPS) at the surface of the outer membrane. The polypeptide is LPS-assembly protein LptD (Bordetella parapertussis (strain 12822 / ATCC BAA-587 / NCTC 13253)).